The sequence spans 88 residues: Cell division topological specificity factor (88 aa).

It belongs to the MinE family.

In terms of biological role, prevents the cell division inhibition by proteins MinC and MinD at internal division sites while permitting inhibition at polar sites. This ensures cell division at the proper site by restricting the formation of a division septum at the midpoint of the long axis of the cell. The chain is Cell division topological specificity factor from Escherichia fergusonii (strain ATCC 35469 / DSM 13698 / CCUG 18766 / IAM 14443 / JCM 21226 / LMG 7866 / NBRC 102419 / NCTC 12128 / CDC 0568-73).